A 1075-amino-acid polypeptide reads, in one-letter code: Nuclear factor of activated T-cells, cytoplasmic 3 (1075 aa).

T2 carries the N-acetylthreonine modification. A disordered region spans residues 18–37 (FGEDGAPAPPPPGSRPADLE). A calcineurin-binding region spans residues 109-114 (PSIQIT). Residues 205–306 (LGSPLTSPGG…PGHSPRGSVT (102 aa)) are disordered. 2 consecutive repeat copies span residues 207–223 (SPLT…PGEE) and 236–252 (SPRQ…VTDE). The 3 X SP repeats stretch occupies residues 207–308 (SPLTSPGGSP…HSPRGSVTED (102 aa)). The span at 236–253 (SPRQSPCHSPRSSVTDEN) shows a compositional bias: polar residues. Residues 256-270 (SPRPASGPSSRPTSP) are compositionally biased toward low complexity. The Nuclear localization signal motif lies at 273-275 (KRR). The stretch at 292-308 (SPVPSPGHSPRGSVTED) is repeat 3. Phosphoserine is present on residues S344 and S372. Residues 415-596 (SSLPPLDWPL…IPVECSQRSA (182 aa)) form the RHD domain. Residues 444–451 (RAHYETEG) mediate DNA binding. A Nuclear localization signal motif is present at residues 686–688 (KRK). Disordered regions lie at residues 711–739 (DLSS…SHDS) and 887–988 (SNTG…GLSA). 2 stretches are compositionally biased toward polar residues: residues 724 to 739 (AQTQ…SHDS) and 887 to 912 (SNTG…QLQP). Low complexity-rich tracts occupy residues 916 to 939 (GPSH…SSPL) and 949 to 967 (PMPY…SPAT). Residues 970 to 981 (HSGQHSTQAQST) are compositionally biased toward polar residues. The Nuclear export signal signature appears at 1032–1041 (TLDDVNEIIG). The disordered stretch occupies residues 1049 to 1075 (VSQGAGVSRQAPLPSPESLDLGRSDGL). Residues S1063 and S1066 each carry the phosphoserine modification.

As to quaternary structure, NFATC proteins bind to DNA as monomers. Member of the multicomponent NFATC transcription complex that consists of at least two components, a pre-existing cytoplasmic component NFATC2 and an inducible nuclear component NFATC1. Other members such as NFATC4, or members of the activating protein-1 family, MAF, GATA4 and Cbp/p300 can also bind the complex. Component of a promoter-binding complex composed of STAT3, NFATC3 and NFATC4; complex formation is enhanced by calcineurin. Interacts with TRIM17; this interaction prevents NFATC3 nuclear localization. Interacts with and ubiquitinated by STUB1/CHIP; HSPA1A/HSP70 is required as a co-chaperone. In terms of processing, ubiquitinated by STUB1/CHIP, leading to proteasomal degradation. Phosphorylated by NFATC-kinase; dephosphorylated by calcineurin. As to expression, predominantly expressed in thymus and is also found in peripheral blood leukocytes and kidney. In terms of tissue distribution, predominantly expressed in skeletal muscle. Also found weakly expressed in the thymus, kidney, testis, spleen, prostate, ovary, small intestine, heart, placenta and pancreas. Expressed in thymus and kidney. As to expression, expressed in thymus and skeletal muscle.

The protein resides in the cytoplasm. It is found in the nucleus. Acts as a regulator of transcriptional activation. Binds to the TNFSF11/RANKL promoter region and promotes TNFSF11 transcription. Binding to the TNFSF11 promoter region is increased by high levels of Ca(2+) which induce NFATC3 expression and may lead to regulation of TNFSF11 expression in osteoblasts. Plays a role in promoting mesenteric arterial wall remodeling in response to the intermittent hypoxia-induced increase in EDN1 and ROCK signaling. As a result NFATC3 colocalizes with F-actin filaments, translocates to the nucleus and promotes transcription of the smooth muscle hypertrophy and differentiation marker ACTA2. Promotes lipopolysaccharide-induced apoptosis and hypertrophy in cardiomyocytes. Following JAK/STAT signaling activation and as part of a complex with NFATC4 and STAT3, binds to the alpha-beta E4 promoter region of CRYAB and activates transcription in cardiomyocytes. In conjunction with NFATC4, involved in embryonic heart development via maintenance of cardiomyocyte survival, proliferation and differentiation. Plays a role in the inducible expression of cytokine genes in T-cells, especially in the induction of the IL-2. Required for thymocyte maturation during DN3 to DN4 transition and during positive selection. Positively regulates macrophage-derived polymicrobial clearance, via binding to the promoter region and promoting transcription of NOS2 resulting in subsequent generation of nitric oxide. Involved in Ca(2+)-mediated transcriptional responses upon Ca(2+) influx via ORAI1 CRAC channels. The sequence is that of Nuclear factor of activated T-cells, cytoplasmic 3 from Homo sapiens (Human).